The sequence spans 542 residues: ATP synthase subunit beta (542 aa).

Over residues 1–50 (MAKTPAKAPAAAAKPAAVKKPAAPKAAAAPKAAAVATPAAKKPAAPKAAP) the composition is skewed to low complexity. The interval 1–61 (MAKTPAKAPA…SKVAGTREKP (61 aa)) is disordered. Residue 216–223 (GGAGVGKT) coordinates ATP.

This sequence belongs to the ATPase alpha/beta chains family. As to quaternary structure, F-type ATPases have 2 components, CF(1) - the catalytic core - and CF(0) - the membrane proton channel. CF(1) has five subunits: alpha(3), beta(3), gamma(1), delta(1), epsilon(1). CF(0) has three main subunits: a(1), b(2) and c(9-12). The alpha and beta chains form an alternating ring which encloses part of the gamma chain. CF(1) is attached to CF(0) by a central stalk formed by the gamma and epsilon chains, while a peripheral stalk is formed by the delta and b chains.

It localises to the cell inner membrane. The enzyme catalyses ATP + H2O + 4 H(+)(in) = ADP + phosphate + 5 H(+)(out). Functionally, produces ATP from ADP in the presence of a proton gradient across the membrane. The catalytic sites are hosted primarily by the beta subunits. This is ATP synthase subunit beta from Caulobacter sp. (strain K31).